Here is a 1517-residue protein sequence, read N- to C-terminus: DNA-directed RNA polymerase subunit beta' (1517 aa).

The Zn(2+) site is built by Cys-71, Cys-73, Cys-86, and Cys-89. Mg(2+) is bound by residues Asp-482, Asp-484, and Asp-486. Positions 812, 886, 893, and 896 each coordinate Zn(2+).

It belongs to the RNA polymerase beta' chain family. As to quaternary structure, the RNAP catalytic core consists of 2 alpha, 1 beta, 1 beta' and 1 omega subunit. When a sigma factor is associated with the core the holoenzyme is formed, which can initiate transcription. Mg(2+) serves as cofactor. Requires Zn(2+) as cofactor.

It carries out the reaction RNA(n) + a ribonucleoside 5'-triphosphate = RNA(n+1) + diphosphate. Its function is as follows. DNA-dependent RNA polymerase catalyzes the transcription of DNA into RNA using the four ribonucleoside triphosphates as substrates. This chain is DNA-directed RNA polymerase subunit beta', found in Campylobacter lari (strain RM2100 / D67 / ATCC BAA-1060).